Here is a 312-residue protein sequence, read N- to C-terminus: Olfactory receptor 1D5 (312 aa).

The Extracellular portion of the chain corresponds to M1–R25. Residue N5 is glycosylated (N-linked (GlcNAc...) asparagine). A helical membrane pass occupies residues I26 to I49. Residues S50–T57 lie on the Cytoplasmic side of the membrane. The chain crosses the membrane as a helical span at residues P58–P79. The Extracellular segment spans residues K80–Q100. The cysteines at positions 97 and 189 are disulfide-linked. The helical transmembrane segment at L101–Y120 threads the bilayer. The Cytoplasmic segment spans residues D121–L140. Residues C141 to L158 traverse the membrane as a helical segment. The Extracellular portion of the chain corresponds to L159–H196. A helical membrane pass occupies residues T197–R220. Residues I221–T237 are Cytoplasmic-facing. Residues F238 to L260 traverse the membrane as a helical segment. At Q261–S271 the chain is on the extracellular side. A helical membrane pass occupies residues V272–L291. Residues R292–K312 are Cytoplasmic-facing.

It belongs to the G-protein coupled receptor 1 family.

It is found in the cell membrane. Its function is as follows. Odorant receptor. This Homo sapiens (Human) protein is Olfactory receptor 1D5 (OR1D5).